The primary structure comprises 461 residues: Proline--tRNA ligase (461 aa).

Belongs to the class-II aminoacyl-tRNA synthetase family. ProS type 3 subfamily. In terms of assembly, homodimer.

The protein resides in the cytoplasm. The enzyme catalyses tRNA(Pro) + L-proline + ATP = L-prolyl-tRNA(Pro) + AMP + diphosphate. Functionally, catalyzes the attachment of proline to tRNA(Pro) in a two-step reaction: proline is first activated by ATP to form Pro-AMP and then transferred to the acceptor end of tRNA(Pro). This chain is Proline--tRNA ligase, found in Methanococcus vannielii (strain ATCC 35089 / DSM 1224 / JCM 13029 / OCM 148 / SB).